A 1423-amino-acid chain; its full sequence is DNA-directed RNA polymerase subunit beta' (1423 aa).

Positions 71, 73, 86, and 89 each coordinate Zn(2+). The Mg(2+) site is built by aspartate 461, aspartate 463, and aspartate 465. 4 residues coordinate Zn(2+): cysteine 815, cysteine 889, cysteine 896, and cysteine 899.

This sequence belongs to the RNA polymerase beta' chain family. The RNAP catalytic core consists of 2 alpha, 1 beta, 1 beta' and 1 omega subunit. When a sigma factor is associated with the core the holoenzyme is formed, which can initiate transcription. Mg(2+) serves as cofactor. Requires Zn(2+) as cofactor.

It catalyses the reaction RNA(n) + a ribonucleoside 5'-triphosphate = RNA(n+1) + diphosphate. Functionally, DNA-dependent RNA polymerase catalyzes the transcription of DNA into RNA using the four ribonucleoside triphosphates as substrates. The polypeptide is DNA-directed RNA polymerase subunit beta' (Actinobacillus pleuropneumoniae serotype 3 (strain JL03)).